We begin with the raw amino-acid sequence, 193 residues long: Shikimate kinase (193 aa).

31 to 36 (GVGKTT) contributes to the ATP binding site. Mg(2+) is bound at residue T35. The substrate site is built by D53, R77, and G103. An ATP-binding site is contributed by R141. R160 is a binding site for substrate. Q176 contacts ATP.

This sequence belongs to the shikimate kinase family. As to quaternary structure, monomer. Mg(2+) serves as cofactor.

The protein resides in the cytoplasm. It catalyses the reaction shikimate + ATP = 3-phosphoshikimate + ADP + H(+). It functions in the pathway metabolic intermediate biosynthesis; chorismate biosynthesis; chorismate from D-erythrose 4-phosphate and phosphoenolpyruvate: step 5/7. Its function is as follows. Catalyzes the specific phosphorylation of the 3-hydroxyl group of shikimic acid using ATP as a cosubstrate. The sequence is that of Shikimate kinase from Novosphingobium aromaticivorans (strain ATCC 700278 / DSM 12444 / CCUG 56034 / CIP 105152 / NBRC 16084 / F199).